Consider the following 382-residue polypeptide: Mannitol-1-phosphate 5-dehydrogenase (382 aa).

Residue 3–14 participates in NAD(+) binding; it reads ALHFGAGNIGRG. N6-acetyllysine is present on lysine 269.

This sequence belongs to the mannitol dehydrogenase family.

The enzyme catalyses D-mannitol 1-phosphate + NAD(+) = beta-D-fructose 6-phosphate + NADH + H(+). This chain is Mannitol-1-phosphate 5-dehydrogenase, found in Shigella sonnei (strain Ss046).